The sequence spans 258 residues: Putative phosphoenolpyruvate synthase regulatory protein (258 aa).

146–153 provides a ligand contact to ADP; it reads GVSRVGKT.

It belongs to the pyruvate, phosphate/water dikinase regulatory protein family. PSRP subfamily.

It carries out the reaction [pyruvate, water dikinase] + ADP = [pyruvate, water dikinase]-phosphate + AMP + H(+). The catalysed reaction is [pyruvate, water dikinase]-phosphate + phosphate + H(+) = [pyruvate, water dikinase] + diphosphate. Functionally, bifunctional serine/threonine kinase and phosphorylase involved in the regulation of the phosphoenolpyruvate synthase (PEPS) by catalyzing its phosphorylation/dephosphorylation. This is Putative phosphoenolpyruvate synthase regulatory protein from Thiobacillus denitrificans (strain ATCC 25259 / T1).